A 171-amino-acid polypeptide reads, in one-letter code: Phosphopantetheine adenylyltransferase (171 aa).

A substrate-binding site is contributed by Thr-9. ATP is bound by residues 9–10 and His-17; that span reads TF. Substrate contacts are provided by Lys-41, Leu-73, and Arg-87. Residues 88–90, Glu-98, and 123–129 contribute to the ATP site; these read GLR and YQFISGT.

Belongs to the bacterial CoaD family. In terms of assembly, homohexamer. Requires Mg(2+) as cofactor.

It localises to the cytoplasm. The enzyme catalyses (R)-4'-phosphopantetheine + ATP + H(+) = 3'-dephospho-CoA + diphosphate. It functions in the pathway cofactor biosynthesis; coenzyme A biosynthesis; CoA from (R)-pantothenate: step 4/5. Its function is as follows. Reversibly transfers an adenylyl group from ATP to 4'-phosphopantetheine, yielding dephospho-CoA (dPCoA) and pyrophosphate. This chain is Phosphopantetheine adenylyltransferase, found in Paraburkholderia phytofirmans (strain DSM 17436 / LMG 22146 / PsJN) (Burkholderia phytofirmans).